Consider the following 524-residue polypeptide: Methylmalonyl-CoA carboxyltransferase 12S subunit (524 aa).

The region spanning 13–268 (MEGRVEQLAE…NNTEEASFVN (256 aa)) is the CoA carboxyltransferase N-terminal domain. A carboxyltransferase region spans residues 13–506 (MEGRVEQLAE…RRKIASALEM (494 aa)). The region spanning 274–506 (SPNTELRDIV…RRKIASALEM (233 aa)) is the CoA carboxyltransferase C-terminal domain.

As to quaternary structure, homohexamer. Transcarboxylase is composed of three subunits: 1.3S, 5S, and 12S. The core of the enzyme is composed of six 12S subunits. On each side of the core there are three pairs of 5S subunits. Each 5S dimer is attached to the core by two 1.3S subunits. Thus the total number of chains is 30 (6 + 12 + 12).

The catalysed reaction is (S)-methylmalonyl-CoA + pyruvate = propanoyl-CoA + oxaloacetate. In terms of biological role, the 12S subunit specifically catalyzes the transfer of the carboxyl group of methylmalonyl CoA to the biotin of the 1.3S subunit forming propanoyl-CoA and carboxylated 1.3S-biotin. This is Methylmalonyl-CoA carboxyltransferase 12S subunit from Propionibacterium freudenreichii subsp. shermanii.